Here is a 189-residue protein sequence, read N- to C-terminus: Protein Rex (189 aa).

A compositionally biased stretch (basic residues) spans 1–16 (MPKTRRRPRRSQRKRP). Residues 1 to 28 (MPKTRRRPRRSQRKRPPTPWPTSQGLDR) form a disordered region. Residues 2–18 (PKTRRRPRRSQRKRPPT) carry the Nuclear localization signal, and RNA-binding (RxRE) motif. The homomultimerization stretch occupies residues 56 to 70 (RPVYIVTPYWPPVQS). Ser70 is subject to Phosphoserine; by host. The Nuclear export signal motif lies at 82–93 (LSAQLYSSLSLD). Over residues 84–94 (AQLYSSLSLDS) the composition is skewed to low complexity. The interval 84–189 (AQLYSSLSLD…PPSPGPSCPT (106 aa)) is disordered. Residues 111 to 125 (RRPPIQPPTFHPPSS) are compositionally biased toward pro residues. Residues 123 to 131 (PSSRPCANT) form a homomultimerization region. Positions 127–164 (PCANTPPSETDTWNPPLGSTSQPCLFQTPASGPKTCTP) are enriched in polar residues. Thr174 is subject to Phosphothreonine; by host. Phosphoserine; by host is present on Ser177. Residues 178–189 (FPPPSPGPSCPT) show a composition bias toward pro residues.

Belongs to the deltaretrovirus Rex protein family. As to quaternary structure, homomultimer. Multimeric assembly is essential for activity and involves XPO1. Binds to human XPO1 and KPNB1. Interacts (via N-terminal nuclear localization signal) with human NPM1. Phosphorylated.

The protein localises to the host nucleus. It localises to the host nucleolus. The protein resides in the host cytoplasm. In terms of biological role, rex escorts unspliced gag-pro-pol and singly spliced env mRNAs out of the nucleus of infected cells. These mRNAs carry a recognition sequence called Rex responsive element (RxRE or XRE) located at the 3' region of the long terminal repeat (LTR). This function is essential since most HTLV proteins are translated from unspliced or partially spliced pre-mRNAs that cannot exit the nucleus by the pathway used by fully processed cellular mRNAs. Rex itself is translated from a fully spliced mRNA that probably readily exits the nucleus. Rex's nuclear localization signal (NLS) binds directly to KPNB1/importin beta-1 without previous binding to KPNA1/importin alpha-1. KPNB1 binds to the GDP bound form of RAN (Ran-GDP) and targets Rex to the nucleus. In the nucleus, the conversion from Ran-GDP to Ran-GTP dissociates Rex from KPNB1 and allows Rex's binding to the RRE in viral pre-mRNAs. Rex multimerizes on the RRE via cooperative assembly. This multimerization is critical for its full biological activity, since it may shield the viral RNA from being spliced or down-regulated, and probably exposes Rex's nuclear export signal (NES) to the surface. Rex can then form a complex with XPO1/CRM1, RANBP3 and Ran-GTP, leading to nuclear export of the complex. Conversion from Ran-GTP to Ran-GDP mediates dissociation of the Rex/RRE/XPO1/RANBP3/RAN complex, so that Rex can return to the nucleus for a subsequent round of export. This chain is Protein Rex, found in Homo sapiens (Human).